We begin with the raw amino-acid sequence, 203 residues long: Endo-type membrane-bound lytic murein transglycosylase A (203 aa).

A signal peptide spans Met1 to Gly15. A lipid anchor (N-palmitoyl cysteine) is attached at Cys16. The S-diacylglycerol cysteine moiety is linked to residue Cys16.

The protein belongs to the transglycosylase Slt family.

The protein resides in the cell outer membrane. It carries out the reaction Endolytic cleavage of the (1-&gt;4)-beta-glycosidic linkage between N-acetylmuramic acid (MurNAc) and N-acetylglucosamine (GlcNAc) residues in peptidoglycan with concomitant formation of a 1,6-anhydrobond in the MurNAc residue.. Functionally, murein-degrading enzyme. May play a role in recycling of muropeptides during cell elongation and/or cell division. Preferentially cleaves at a distance of more than two disaccharide units from the ends of the glycan chain. The chain is Endo-type membrane-bound lytic murein transglycosylase A from Shigella boydii serotype 4 (strain Sb227).